The chain runs to 236 residues: Eukaryotic translation initiation factor 3 subunit K (236 aa).

In terms of domain architecture, PCI spans 48–218 (CDCNANRTLL…EAKKAEIRED (171 aa)).

The protein belongs to the eIF-3 subunit K family.

The protein localises to the cytoplasm. Its function is as follows. Component of the eukaryotic translation initiation factor 3 (eIF-3) complex, which is involved in protein synthesis of a specialized repertoire of mRNAs and, together with other initiation factors, stimulates binding of mRNA and methionyl-tRNAi to the 40S ribosome. The eIF-3 complex specifically targets and initiates translation of a subset of mRNAs involved in cell proliferation. The chain is Eukaryotic translation initiation factor 3 subunit K from Pyricularia oryzae (strain Y34) (Rice blast fungus).